Reading from the N-terminus, the 153-residue chain is Troponin C (153 aa).

EF-hand domains follow at residues 9–44 (EQVQ…LGQT), 45–80 (FEEN…FLVE), 85–120 (AMQE…LDDK), and 121–153 (LTED…MTGD). Ca(2+)-binding residues include Asp-58, Asp-60, Ser-62, Glu-64, and Glu-69. Residues Asp-134, Asp-136, Ser-138, Thr-140, and Glu-145 each contribute to the Ca(2+) site.

Belongs to the troponin C family.

Troponin is the central regulatory protein of striated muscle contraction. Tn consists of three components: Tn-I which is the inhibitor of actomyosin ATPase, Tn-T which contains the binding site for tropomyosin and Tn-C. The binding of calcium to Tn-C abolishes the inhibitory action of Tn on actin filaments. In Tyrophagus putrescentiae (Mold mite), this protein is Troponin C.